The primary structure comprises 215 residues: 3,4-dihydroxy-2-butanone 4-phosphate synthase (215 aa).

Residues 37-38 (RE), D42, 150-154 (RPGHT), and E174 contribute to the D-ribulose 5-phosphate site. E38 contributes to the Mg(2+) binding site. H153 serves as a coordination point for Mg(2+).

The protein belongs to the DHBP synthase family. Homodimer. Requires Mg(2+) as cofactor. It depends on Mn(2+) as a cofactor.

The enzyme catalyses D-ribulose 5-phosphate = (2S)-2-hydroxy-3-oxobutyl phosphate + formate + H(+). Its pathway is cofactor biosynthesis; riboflavin biosynthesis; 2-hydroxy-3-oxobutyl phosphate from D-ribulose 5-phosphate: step 1/1. In terms of biological role, catalyzes the conversion of D-ribulose 5-phosphate to formate and 3,4-dihydroxy-2-butanone 4-phosphate. The protein is 3,4-dihydroxy-2-butanone 4-phosphate synthase of Buchnera aphidicola subsp. Acyrthosiphon pisum (strain 5A).